Here is a 426-residue protein sequence, read N- to C-terminus: Glutamate-1-semialdehyde 2,1-aminomutase (426 aa).

The residue at position 265 (K265) is an N6-(pyridoxal phosphate)lysine.

The protein belongs to the class-III pyridoxal-phosphate-dependent aminotransferase family. HemL subfamily. As to quaternary structure, homodimer. Pyridoxal 5'-phosphate is required as a cofactor.

Its subcellular location is the cytoplasm. It catalyses the reaction (S)-4-amino-5-oxopentanoate = 5-aminolevulinate. It functions in the pathway porphyrin-containing compound metabolism; protoporphyrin-IX biosynthesis; 5-aminolevulinate from L-glutamyl-tRNA(Glu): step 2/2. The protein is Glutamate-1-semialdehyde 2,1-aminomutase of Salmonella choleraesuis (strain SC-B67).